Here is a 316-residue protein sequence, read N- to C-terminus: Porphobilinogen deaminase (316 aa).

Cysteine 245 is subject to S-(dipyrrolylmethanemethyl)cysteine.

The protein belongs to the HMBS family. As to quaternary structure, monomer. Dipyrromethane serves as cofactor.

The catalysed reaction is 4 porphobilinogen + H2O = hydroxymethylbilane + 4 NH4(+). Its pathway is porphyrin-containing compound metabolism; protoporphyrin-IX biosynthesis; coproporphyrinogen-III from 5-aminolevulinate: step 2/4. It participates in porphyrin-containing compound metabolism; chlorophyll biosynthesis. Functionally, tetrapolymerization of the monopyrrole PBG into the hydroxymethylbilane pre-uroporphyrinogen in several discrete steps. This Prochlorococcus marinus (strain AS9601) protein is Porphobilinogen deaminase.